Consider the following 286-residue polypeptide: Pantothenate synthetase (286 aa).

Position 30–37 (30–37 (MGALHEGH)) interacts with ATP. The Proton donor role is filled by H37. Q61 lines the (R)-pantoate pocket. Residue Q61 coordinates beta-alanine. 147–150 (GEKD) is an ATP binding site. Q153 contacts (R)-pantoate. Residues V180 and 188–191 (LSSR) each bind ATP.

Belongs to the pantothenate synthetase family. As to quaternary structure, homodimer.

Its subcellular location is the cytoplasm. It catalyses the reaction (R)-pantoate + beta-alanine + ATP = (R)-pantothenate + AMP + diphosphate + H(+). It functions in the pathway cofactor biosynthesis; (R)-pantothenate biosynthesis; (R)-pantothenate from (R)-pantoate and beta-alanine: step 1/1. In terms of biological role, catalyzes the condensation of pantoate with beta-alanine in an ATP-dependent reaction via a pantoyl-adenylate intermediate. The sequence is that of Pantothenate synthetase from Novosphingobium aromaticivorans (strain ATCC 700278 / DSM 12444 / CCUG 56034 / CIP 105152 / NBRC 16084 / F199).